A 156-amino-acid polypeptide reads, in one-letter code: Cytochrome c-type biogenesis protein CcmE 2 (156 aa).

The Cytoplasmic segment spans residues 1 to 8; that stretch reads MNPQRRRR. A helical; Signal-anchor for type II membrane protein transmembrane segment spans residues 9 to 29; that stretch reads LWLVLALVLAGGLATTLVAMA. Topologically, residues 30–156 are periplasmic; sequence LQRNVAYLYT…AAAGQVGERQ (127 aa). Heme contacts are provided by His-123 and Tyr-127. The disordered stretch occupies residues 136–156; the sequence is MGSAHRKHDVPAAAGQVGERQ.

The protein belongs to the CcmE/CycJ family.

Its subcellular location is the cell inner membrane. Functionally, heme chaperone required for the biogenesis of c-type cytochromes. Transiently binds heme delivered by CcmC and transfers the heme to apo-cytochromes in a process facilitated by CcmF and CcmH. The protein is Cytochrome c-type biogenesis protein CcmE 2 of Xanthomonas axonopodis pv. citri (strain 306).